We begin with the raw amino-acid sequence, 299 residues long: Glycine--tRNA ligase alpha subunit (299 aa).

This sequence belongs to the class-II aminoacyl-tRNA synthetase family. Tetramer of two alpha and two beta subunits.

It localises to the cytoplasm. The enzyme catalyses tRNA(Gly) + glycine + ATP = glycyl-tRNA(Gly) + AMP + diphosphate. The polypeptide is Glycine--tRNA ligase alpha subunit (Dictyoglomus turgidum (strain DSM 6724 / Z-1310)).